The chain runs to 875 residues: Outer membrane usher protein FocD (875 aa).

The signal sequence occupies residues 1-38 (MFFGDGGQLLSDKSLTGSAGGGNNRMKFNILPLAFFIG). The cysteines at positions 852 and 874 are disulfide-linked.

Belongs to the fimbrial export usher family.

It is found in the cell outer membrane. Involved in the export and assembly of the F1C fimbriae subunits across the outer membrane. The chain is Outer membrane usher protein FocD (focD) from Escherichia coli.